A 292-amino-acid chain; its full sequence is Glycine--tRNA ligase alpha subunit (292 aa).

Belongs to the class-II aminoacyl-tRNA synthetase family. In terms of assembly, tetramer of two alpha and two beta subunits.

The protein resides in the cytoplasm. The enzyme catalyses tRNA(Gly) + glycine + ATP = glycyl-tRNA(Gly) + AMP + diphosphate. The protein is Glycine--tRNA ligase alpha subunit of Pelotomaculum thermopropionicum (strain DSM 13744 / JCM 10971 / SI).